Consider the following 473-residue polypeptide: Mediator of RNA polymerase II transcription subunit 29 (473 aa).

Over residues 1–12 (MSGQGPPSNLTP) the composition is skewed to polar residues. 2 disordered regions span residues 1–319 (MSGQ…NEEQ) and 444–473 (STME…EMAE). Over residues 13–50 (QQQHMIMQQQQQQQMMRQQQIQQQQLHQRQLQQQQAQQ) the composition is skewed to low complexity. A compositionally biased stretch (polar residues) spans 51-62 (SYQRSRTPQMQQ). Composition is skewed to low complexity over residues 111–123 (QMMQ…NQPM) and 130–139 (VSRPGSVAPP). Polar residues-rich tracts occupy residues 148 to 183 (TGPS…QQSH) and 255 to 269 (PPGS…QPGS). Composition is skewed to low complexity over residues 272–286 (APGS…QPPA) and 294–308 (AASG…AAPA).

This sequence belongs to the Mediator complex subunit 29 family. As to quaternary structure, component of the Mediator complex.

The protein resides in the nucleus. Its function is as follows. Component of the Mediator complex, a coactivator involved in the regulated transcription of nearly all RNA polymerase II-dependent genes. Mediator functions as a bridge to convey information from gene-specific regulatory proteins to the basal RNA polymerase II transcription machinery. Mediator is recruited to promoters by direct interactions with regulatory proteins and serves as a scaffold for the assembly of a functional preinitiation complex with RNA polymerase II and the general transcription factors. The protein is Mediator of RNA polymerase II transcription subunit 29 (mdt-29) of Caenorhabditis briggsae.